The chain runs to 260 residues: MFEARLGQATILKKILDAIKDLLNEATFDCSDSGIQLQAMDNSHVSLVSLTLRSDGFDKFRCDRNLSMGMNLGSMAKILKCANNEDNVTMKAQDNADTVTIMFESANQEKVSDYEMKLMNLDQEHLGIPETDFSCVVRMPAMEFARICRDLAQFSESVVICCTKEGVKFSASGDVGTANIKLAQTGSVDKEEEAVIIEMQEPVTLTFACRYLNAFTKATPLSTQVQLSMCADVPLVVEYAIKDLGHIRYYLAPKIEDNET.

The DNA-binding element occupies 61-80; the sequence is RCDRNLSMGMNLGSMAKILK.

This sequence belongs to the PCNA family. As to quaternary structure, homotrimer. Forms a complex with activator 1 heteropentamer in the presence of ATP. Interacts with E2f. Interacts with the catalytic subunits of two DNA polymerase complexes: PolD1 from the delta complex and PolE1/DNApol-epsilon255 from the epsilon complex. As to expression, expressed at high levels in adult ovary.

It is found in the nucleus. The protein resides in the chromosome. Its subcellular location is the cytoplasm. Likely to be an auxiliary protein of DNA polymerase delta complex and is probably involved in the control of DNA replication and repair by increasing the polymerase's processibility. In Drosophila melanogaster (Fruit fly), this protein is Proliferating cell nuclear antigen.